A 177-amino-acid polypeptide reads, in one-letter code: GTP-dependent dephospho-CoA kinase (177 aa).

Residues Gly25, Tyr31, Asp48, Val49, Val50, Asp67, Lys69, Glu124, and Asp147 each contribute to the GTP site.

This sequence belongs to the GTP-dependent DPCK family. In terms of assembly, monomer in solution.

It catalyses the reaction 3'-dephospho-CoA + GTP = GDP + CoA + H(+). The protein operates within cofactor biosynthesis; coenzyme A biosynthesis. In terms of biological role, catalyzes the GTP-dependent phosphorylation of the 3'-hydroxyl group of dephosphocoenzyme A to form coenzyme A (CoA). Can also use UTP, with lower efficiency and has weak activity with ATP, but shows a strong preference for GTP as the phosphate donor. This Thermococcus kodakarensis (strain ATCC BAA-918 / JCM 12380 / KOD1) (Pyrococcus kodakaraensis (strain KOD1)) protein is GTP-dependent dephospho-CoA kinase.